We begin with the raw amino-acid sequence, 168 residues long: Small ribosomal subunit protein uS4 (168 aa).

One can recognise an S4 RNA-binding domain in the interval arginine 103–lysine 167.

It belongs to the universal ribosomal protein uS4 family. In terms of assembly, part of the 30S ribosomal subunit. Contacts protein S5. The interaction surface between S4 and S5 is involved in control of translational fidelity.

Its function is as follows. One of the primary rRNA binding proteins, it binds directly to 16S rRNA where it nucleates assembly of the body of the 30S subunit. With S5 and S12 plays an important role in translational accuracy. This chain is Small ribosomal subunit protein uS4, found in Staphylothermus marinus (strain ATCC 43588 / DSM 3639 / JCM 9404 / F1).